We begin with the raw amino-acid sequence, 135 residues long: Large ribosomal subunit protein uL16c (135 aa).

Residues 1-17 (MLSPKRTRFRKQHRGRM) are compositionally biased toward basic residues. Positions 1–21 (MLSPKRTRFRKQHRGRMKGVS) are disordered.

Belongs to the universal ribosomal protein uL16 family. As to quaternary structure, part of the 50S ribosomal subunit.

Its subcellular location is the plastid. It localises to the chloroplast. The protein is Large ribosomal subunit protein uL16c of Amborella trichopoda.